The primary structure comprises 356 residues: Ferrochelatase (356 aa).

Fe cation contacts are provided by histidine 214 and glutamate 295.

It belongs to the ferrochelatase family.

The protein resides in the cytoplasm. It carries out the reaction heme b + 2 H(+) = protoporphyrin IX + Fe(2+). The protein operates within porphyrin-containing compound metabolism; protoheme biosynthesis; protoheme from protoporphyrin-IX: step 1/1. Catalyzes the ferrous insertion into protoporphyrin IX. In Paraburkholderia phymatum (strain DSM 17167 / CIP 108236 / LMG 21445 / STM815) (Burkholderia phymatum), this protein is Ferrochelatase.